The primary structure comprises 214 residues: MTEINFRNAQFLISAPSLRECPAEEGAEVAFAGRSNAGKSSAINCLTNNGKLARTSKTPGRTQLINFFSLGQGAQQRLVDLPGYGYAKVPLATKREWQAHLSEYLYKRKCLRGLVLLMDIRHPMQEFDTMMLNWAVDANMPVHLLLTKSDKLKRGAANNTLLQVNRSLKESGVQDLVSAQIFSSLKNVGVQQLEQVITGWLNLPAGEDEASVKN.

Residues 25–203 (EGAEVAFAGR…EQVITGWLNL (179 aa)) enclose the EngB-type G domain. Residues 33–40 (GRSNAGKS), 60–64 (GRTQL), 80–83 (DLPG), 147–150 (TKSD), and 182–184 (FSS) contribute to the GTP site. Positions 40 and 62 each coordinate Mg(2+).

This sequence belongs to the TRAFAC class TrmE-Era-EngA-EngB-Septin-like GTPase superfamily. EngB GTPase family. Mg(2+) is required as a cofactor.

Necessary for normal cell division and for the maintenance of normal septation. The chain is Probable GTP-binding protein EngB from Teredinibacter turnerae (strain ATCC 39867 / T7901).